Reading from the N-terminus, the 90-residue chain is MIRYSAIVQGRVQGVGFRYFIQLTACKLSLTGWCKNLMNGNVEIEVQGLENNVLSFVSEIKKGNGFAKVSDIDLNILPVLDGEKKFSIKY.

The region spanning 3 to 90 (RYSAIVQGRV…DGEKKFSIKY (88 aa)) is the Acylphosphatase-like domain. Active-site residues include Arg18 and Asn36.

Belongs to the acylphosphatase family.

The catalysed reaction is an acyl phosphate + H2O = a carboxylate + phosphate + H(+). This is Acylphosphatase (acyP) from Clostridium beijerinckii (strain ATCC 51743 / NCIMB 8052) (Clostridium acetobutylicum).